The chain runs to 514 residues: MSKSWNHDRAAKHIDQKIADVEEITIKDYVRDMSLESIPTSTAYRVDGVHMYADIMNLEDMLNITAVEGTECHKRTLRFLDQHYRAVKRILNKVDARRVDFHSQRLHSLFTKPYNTESGAETKRVQRAVATAQLIIDVLAETGDDDEQIPAAKVRIGIDTGLALAVNNGRSGYREPLFLGDPANHAAKLASNNKARGIYLTNNARKAIGLAESDEPEKSALTAIEIKACQDAAKLDVTSDEIVEEWREDLKKNPIGGYQFSRQTPPLRDMDIYSLTPANSKRQEMVSLYADIDGFTAYVADHINEKTDDVVRTLHVIRSELERVVTSDFEGRRVRFIGDCVQALSCDGTAHTTDEEKSVSEATRLAGALRSSFNLAIERLNAEGIETGDLGLAIGFDLGPIAVTRLGAKGNRVRCAIGRSVIESEKRQCACSGVETAIGQVAYDAASKAVQNLFGKSRKTSHLDYNEATEALADDGDASAKQARSEAYAGSAAIIRADERQVQPHSRQKVDGSR.

Guanylate cyclase domains lie at 49 to 190 (VHMY…AKLA) and 286 to 428 (VSLY…EKRQ). A ribonucleoside 5'-triphosphate contacts are provided by residues Tyr-52, Arg-105, Phe-178, 184–188 (NHAAK), and 291–296 (DIDGFT). 3 residues coordinate Ca(2+): Asp-291, Ile-292, and Asp-339. Asp-291 contacts Mn(2+). The interval 495 to 514 (IRADERQVQPHSRQKVDGSR) is disordered. A compositionally biased stretch (basic and acidic residues) spans 496 to 514 (RADERQVQPHSRQKVDGSR).

The protein belongs to the adenylyl cyclase class-4/guanylyl cyclase family. Pyrimidine cyclase subfamily. In terms of assembly, monomer. The cofactor is a divalent metal cation.

Its subcellular location is the cytoplasm. It carries out the reaction UTP = 3',5'-cyclic UMP + diphosphate. Functionally, pycsar (pyrimidine cyclase system for antiphage resistance) provides immunity against bacteriophage. The pyrimidine cyclase (PycC) synthesizes cyclic nucleotides in response to infection; these serve as specific second messenger signals. The signals activate the adjacent effector, leading to bacterial cell death and abortive phage infection. A clade A Pycsar system. In terms of biological role, the pyrimidine cyclase gene of a two-gene Pycsar system, generates cyclic UMP (cUMP) from UTP, has little to no activity on ATP, CTP or GTP. Expression of this and adjacent effector PaPycTIR (AC P0DV41) probably confers resistance to bacteriophage. The genes are probably only expressed in response to bacteriophage infection. Does not have adenylyl or guanylyl cyclase activity. The polypeptide is Uridylate cyclase (Pseudomonas aeruginosa).